The following is a 58-amino-acid chain: Large ribosomal subunit protein bL32 (58 aa).

The segment covering 1–20 (MALPKHKKSKSKRDKRRTHQ) has biased composition (basic residues). Residues 1-26 (MALPKHKKSKSKRDKRRTHQKLTAPN) are disordered.

It belongs to the bacterial ribosomal protein bL32 family.

This chain is Large ribosomal subunit protein bL32, found in Desulfatibacillum aliphaticivorans.